A 361-amino-acid polypeptide reads, in one-letter code: tRNA/tmRNA (uracil-C(5))-methyltransferase (361 aa).

5 residues coordinate S-adenosyl-L-methionine: Q185, Y213, N218, E234, and D294. C319 acts as the Nucleophile in catalysis. The active-site Proton acceptor is the E353.

Belongs to the class I-like SAM-binding methyltransferase superfamily. RNA M5U methyltransferase family. TrmA subfamily.

The catalysed reaction is uridine(54) in tRNA + S-adenosyl-L-methionine = 5-methyluridine(54) in tRNA + S-adenosyl-L-homocysteine + H(+). The enzyme catalyses uridine(341) in tmRNA + S-adenosyl-L-methionine = 5-methyluridine(341) in tmRNA + S-adenosyl-L-homocysteine + H(+). Functionally, dual-specificity methyltransferase that catalyzes the formation of 5-methyluridine at position 54 (m5U54) in all tRNAs, and that of position 341 (m5U341) in tmRNA (transfer-mRNA). In Azotobacter vinelandii (strain DJ / ATCC BAA-1303), this protein is tRNA/tmRNA (uracil-C(5))-methyltransferase.